The primary structure comprises 457 residues: Acetylcholine receptor subunit alpha (457 aa).

The N-terminal stretch at methionine 1–glycine 20 is a signal peptide. Residues serine 21–leucine 230 lie on the Extracellular side of the membrane. Disulfide bonds link cysteine 148–cysteine 162 and cysteine 212–cysteine 213. A glycan (N-linked (GlcNAc...) asparagine) is linked at asparagine 161. 3 consecutive transmembrane segments (helical) span residues proline 231–leucine 255, methionine 263–valine 281, and tyrosine 297–isoleucine 316. Residues asparagine 317 to histidine 428 lie on the Cytoplasmic side of the membrane. Residues isoleucine 429–alanine 447 form a helical membrane-spanning segment.

The protein belongs to the ligand-gated ion channel (TC 1.A.9) family. Acetylcholine receptor (TC 1.A.9.1) subfamily. Alpha-1/CHRNA1 sub-subfamily. As to quaternary structure, one of the alpha chains that assemble within the acetylcholine receptor, a pentamer of two alpha chains, a beta, a delta, and a gamma (in immature muscle) or epsilon (in mature muscle) chains. The muscle heteropentamer composed of alpha-1, beta-1, delta, epsilon subunits interacts with the alpha-conotoxin ImII.

The protein resides in the postsynaptic cell membrane. It is found in the cell membrane. The enzyme catalyses K(+)(in) = K(+)(out). The catalysed reaction is Na(+)(in) = Na(+)(out). In terms of biological role, upon acetylcholine binding, the AChR responds by an extensive change in conformation that affects all subunits and leads to opening of an ion-conducting channel across the plasma membrane. This Rattus norvegicus (Rat) protein is Acetylcholine receptor subunit alpha (Chrna1).